Here is a 163-residue protein sequence, read N- to C-terminus: D-aminoacyl-tRNA deacylase (163 aa).

The Gly-cisPro motif, important for rejection of L-amino acids signature appears at 141-142 (GP).

It belongs to the DTD family. As to quaternary structure, homodimer.

It is found in the cytoplasm. It catalyses the reaction glycyl-tRNA(Ala) + H2O = tRNA(Ala) + glycine + H(+). The enzyme catalyses a D-aminoacyl-tRNA + H2O = a tRNA + a D-alpha-amino acid + H(+). Functionally, an aminoacyl-tRNA editing enzyme that deacylates mischarged D-aminoacyl-tRNAs. Also deacylates mischarged glycyl-tRNA(Ala), protecting cells against glycine mischarging by AlaRS. Acts via tRNA-based rather than protein-based catalysis; rejects L-amino acids rather than detecting D-amino acids in the active site. By recycling D-aminoacyl-tRNA to D-amino acids and free tRNA molecules, this enzyme counteracts the toxicity associated with the formation of D-aminoacyl-tRNA entities in vivo and helps enforce protein L-homochirality. This Neisseria meningitidis serogroup B (strain ATCC BAA-335 / MC58) protein is D-aminoacyl-tRNA deacylase.